The following is a 293-amino-acid chain: Formamidopyrimidine-DNA glycosylase (293 aa).

Pro2 serves as the catalytic Schiff-base intermediate with DNA. The active-site Proton donor is the Glu3. Lys58 serves as the catalytic Proton donor; for beta-elimination activity. DNA is bound by residues His104, Arg123, and Arg166. The segment at 257 to 293 (QVYDREGDKCRTPACKGAVKRFTQNGRSTFWCPVCQT) adopts an FPG-type zinc-finger fold. Arg283 serves as the catalytic Proton donor; for delta-elimination activity.

The protein belongs to the FPG family. As to quaternary structure, monomer. The cofactor is Zn(2+).

The enzyme catalyses Hydrolysis of DNA containing ring-opened 7-methylguanine residues, releasing 2,6-diamino-4-hydroxy-5-(N-methyl)formamidopyrimidine.. It catalyses the reaction 2'-deoxyribonucleotide-(2'-deoxyribose 5'-phosphate)-2'-deoxyribonucleotide-DNA = a 3'-end 2'-deoxyribonucleotide-(2,3-dehydro-2,3-deoxyribose 5'-phosphate)-DNA + a 5'-end 5'-phospho-2'-deoxyribonucleoside-DNA + H(+). In terms of biological role, involved in base excision repair of DNA damaged by oxidation or by mutagenic agents. Acts as a DNA glycosylase that recognizes and removes damaged bases. Has a preference for oxidized purines, such as 7,8-dihydro-8-oxoguanine (8-oxoG). Has AP (apurinic/apyrimidinic) lyase activity and introduces nicks in the DNA strand. Cleaves the DNA backbone by beta-delta elimination to generate a single-strand break at the site of the removed base with both 3'- and 5'-phosphates. In Nitrobacter winogradskyi (strain ATCC 25391 / DSM 10237 / CIP 104748 / NCIMB 11846 / Nb-255), this protein is Formamidopyrimidine-DNA glycosylase.